The sequence spans 43 residues: uncharacterized protein (43 aa).

Belongs to the ELIP/psbS family.

The protein localises to the plastid. The protein resides in the chloroplast. Its function is as follows. Possible role in chlorophyll and/or carotenoid binding. This is an uncharacterized protein from Cyanidium caldarium (Red alga).